Reading from the N-terminus, the 248-residue chain is Ribonuclease PH (248 aa).

Phosphate is bound by residues R86 and 124 to 126 (GTR).

It belongs to the RNase PH family. In terms of assembly, homohexameric ring arranged as a trimer of dimers.

The catalysed reaction is tRNA(n+1) + phosphate = tRNA(n) + a ribonucleoside 5'-diphosphate. Phosphorolytic 3'-5' exoribonuclease that plays an important role in tRNA 3'-end maturation. Removes nucleotide residues following the 3'-CCA terminus of tRNAs; can also add nucleotides to the ends of RNA molecules by using nucleoside diphosphates as substrates, but this may not be physiologically important. Probably plays a role in initiation of 16S rRNA degradation (leading to ribosome degradation) during starvation. The sequence is that of Ribonuclease PH from Listeria monocytogenes serotype 4b (strain CLIP80459).